Here is a 194-residue protein sequence, read N- to C-terminus: uncharacterized protein (194 aa).

The region spanning 6–66 (EFDTALVLHR…SAVKSYLEGK (61 aa)) is the HTH tetR-type domain. The H-T-H motif DNA-binding region spans 29–48 (SLQDLLSHLGIARQSLYDTY).

This is an uncharacterized protein from Bacillus subtilis (strain 168).